The sequence spans 115 residues: U3-lycotoxin-Ls1l (115 aa).

Residues 1-20 form the signal peptide; the sequence is MKFVLLFGVLLVTLFSYSSA. Positions 21–44 are excised as a propeptide; the sequence is EMLDDFDQADEDELLSLIEKEEAR. 3 disulfide bridges follow: cysteine 55–cysteine 72, cysteine 62–cysteine 87, and cysteine 74–cysteine 85.

The protein belongs to the neurotoxin 19 (CSTX) family. 01 subfamily. As to expression, expressed by the venom gland.

The protein localises to the secreted. The chain is U3-lycotoxin-Ls1l from Lycosa singoriensis (Wolf spider).